The chain runs to 179 residues: ATP synthase subunit delta (179 aa).

This sequence belongs to the ATPase delta chain family. In terms of assembly, F-type ATPases have 2 components, F(1) - the catalytic core - and F(0) - the membrane proton channel. F(1) has five subunits: alpha(3), beta(3), gamma(1), delta(1), epsilon(1). F(0) has three main subunits: a(1), b(2) and c(10-14). The alpha and beta chains form an alternating ring which encloses part of the gamma chain. F(1) is attached to F(0) by a central stalk formed by the gamma and epsilon chains, while a peripheral stalk is formed by the delta and b chains.

The protein localises to the cell inner membrane. Its function is as follows. F(1)F(0) ATP synthase produces ATP from ADP in the presence of a proton or sodium gradient. F-type ATPases consist of two structural domains, F(1) containing the extramembraneous catalytic core and F(0) containing the membrane proton channel, linked together by a central stalk and a peripheral stalk. During catalysis, ATP synthesis in the catalytic domain of F(1) is coupled via a rotary mechanism of the central stalk subunits to proton translocation. In terms of biological role, this protein is part of the stalk that links CF(0) to CF(1). It either transmits conformational changes from CF(0) to CF(1) or is implicated in proton conduction. This chain is ATP synthase subunit delta, found in Alkalilimnicola ehrlichii (strain ATCC BAA-1101 / DSM 17681 / MLHE-1).